Reading from the N-terminus, the 159-residue chain is Phosphopantetheine adenylyltransferase (159 aa).

An ATP-binding site is contributed by H16. Residues K40, M72, and R86 each coordinate substrate. Residues 87 to 89 (GLR), E97, and 122 to 128 (YQYLSAS) each bind ATP.

Belongs to the bacterial CoaD family. Homohexamer. The cofactor is Mg(2+).

It localises to the cytoplasm. It catalyses the reaction (R)-4'-phosphopantetheine + ATP + H(+) = 3'-dephospho-CoA + diphosphate. Its pathway is cofactor biosynthesis; coenzyme A biosynthesis; CoA from (R)-pantothenate: step 4/5. In terms of biological role, reversibly transfers an adenylyl group from ATP to 4'-phosphopantetheine, yielding dephospho-CoA (dPCoA) and pyrophosphate. This is Phosphopantetheine adenylyltransferase from Dehalococcoides mccartyi (strain CBDB1).